Here is a 340-residue protein sequence, read N- to C-terminus: GTP 3',8-cyclase (340 aa).

In terms of domain architecture, Radical SAM core spans 8–230; the sequence is KLGRPIRDLR…EQHFEIDPVE (223 aa). Residue R17 coordinates GTP. 2 residues coordinate [4Fe-4S] cluster: C24 and C28. Y30 contributes to the S-adenosyl-L-methionine binding site. C31 contacts [4Fe-4S] cluster. Residue R71 participates in GTP binding. G75 contacts S-adenosyl-L-methionine. T102 lines the GTP pocket. S126 is an S-adenosyl-L-methionine binding site. K163 is a GTP binding site. Position 197 (M197) interacts with S-adenosyl-L-methionine. The [4Fe-4S] cluster site is built by C261 and C264. Residue 266–268 participates in GTP binding; it reads RAR. C278 is a [4Fe-4S] cluster binding site.

This sequence belongs to the radical SAM superfamily. MoaA family. Monomer and homodimer. Requires [4Fe-4S] cluster as cofactor.

It carries out the reaction GTP + AH2 + S-adenosyl-L-methionine = (8S)-3',8-cyclo-7,8-dihydroguanosine 5'-triphosphate + 5'-deoxyadenosine + L-methionine + A + H(+). Its pathway is cofactor biosynthesis; molybdopterin biosynthesis. In terms of biological role, catalyzes the cyclization of GTP to (8S)-3',8-cyclo-7,8-dihydroguanosine 5'-triphosphate. The protein is GTP 3',8-cyclase of Staphylococcus aureus (strain bovine RF122 / ET3-1).